The primary structure comprises 310 residues: UDP-N-acetylenolpyruvoylglucosamine reductase (310 aa).

The FAD-binding PCMH-type domain occupies 34-213 (RAGGNAEVLF…LRRMNEITSS (180 aa)). The active site involves Arg178. Ser227 functions as the Proton donor in the catalytic mechanism. Residue Glu297 is part of the active site.

This sequence belongs to the MurB family. FAD serves as cofactor.

It localises to the cytoplasm. The enzyme catalyses UDP-N-acetyl-alpha-D-muramate + NADP(+) = UDP-N-acetyl-3-O-(1-carboxyvinyl)-alpha-D-glucosamine + NADPH + H(+). The protein operates within cell wall biogenesis; peptidoglycan biosynthesis. Cell wall formation. The polypeptide is UDP-N-acetylenolpyruvoylglucosamine reductase (Parvibaculum lavamentivorans (strain DS-1 / DSM 13023 / NCIMB 13966)).